Reading from the N-terminus, the 1488-residue chain is Calmodulin binding protein PICBP (1488 aa).

Disordered regions lie at residues 1-31 (MSNP…RKMW), 63-112 (TAES…SRIS), 280-329 (GPLG…GRSS), and 378-414 (HDHD…EEDG). Residues 18–31 (SSRRVHKRRERKMW) are compositionally biased toward basic residues. Residues 76–86 (DDSRTYSKSSD) show a composition bias toward basic and acidic residues. Positions 98-107 (SVKRRAKSKS) are enriched in basic residues. A compositionally biased stretch (acidic residues) spans 297 to 312 (DNVDGDSDEEVFEEEV). Calmodulin-binding stretches follow at residues 493 to 592 (TFHM…SLIP) and 831 to 938 (NSLK…DIVL). 2 disordered regions span residues 816–844 (IPDS…GETK) and 941–971 (HDTP…EGCE). Composition is skewed to basic and acidic residues over residues 833–844 (LKEEKEHQGETK) and 954–971 (RNND…EGCE). Residues 1135 to 1229 (EKRVKGWNNV…SLLAQAFDTI (95 aa)) are calmodulin-binding. Disordered regions lie at residues 1232–1252 (QDMG…ISRQ) and 1316–1340 (EKNQ…DTSV). Over residues 1235-1252 (GSGSTPGSAASSRNISRQ) the composition is skewed to low complexity. Residues 1316 to 1328 (EKNQTLPEETRKE) show a composition bias toward basic and acidic residues. The calmodulin-binding stretch occupies residues 1379–1483 (RQKSETLQVS…QLLVQAFESL (105 aa)).

Functionally, binds calmodulin in a calcium-dependent manner in vitro. May play a role in general plant defense including R gene-mediated responses. The protein is Calmodulin binding protein PICBP of Arabidopsis thaliana (Mouse-ear cress).